The following is a 242-amino-acid chain: NAD(P)H-hydrate epimerase (242 aa).

The YjeF N-terminal domain occupies 11-221 (AKALDAELMS…KVITKKFNLS (211 aa)). 61–65 (NNGGD) is a binding site for (6S)-NADPHX. Residues N62 and D128 each coordinate K(+). (6S)-NADPHX is bound by residues 132-138 (GFSFKGP) and D161. S164 is a K(+) binding site.

It belongs to the NnrE/AIBP family. K(+) serves as cofactor.

The protein resides in the cytoplasm. The protein localises to the mitochondrion. Its subcellular location is the nucleus. The catalysed reaction is (6R)-NADHX = (6S)-NADHX. The enzyme catalyses (6R)-NADPHX = (6S)-NADPHX. In terms of biological role, catalyzes the epimerization of the S- and R-forms of NAD(P)HX, a damaged form of NAD(P)H that is a result of enzymatic or heat-dependent hydration. This is a prerequisite for the S-specific NAD(P)H-hydrate dehydratase to allow the repair of both epimers of NAD(P)HX. May have a role in meiosis. This Schizosaccharomyces pombe (strain 972 / ATCC 24843) (Fission yeast) protein is NAD(P)H-hydrate epimerase (mug182).